Reading from the N-terminus, the 192-residue chain is Putative cyclic ADP-D-ribose synthase ThsB1 (192 aa).

Belongs to the Thoeris B TIR-like family. In terms of assembly, monomer; not seen to interact with ThsA.

It is found in the cytoplasm. Its activity is regulated as follows. Activated upon phage infection. TIR-like domain-containing component of the Thoeris antiviral defense system, composed of ThsA and ThsB. Expression of ThsA and ThsB in B.subtilis (strain BEST7003) confers resistance to phages SBSphiC, SBSphiJ and SPO1. Phage infection activates this protein so that 30 to 45 minutes post-infection with phage SPO1 it generates a signal molecule that in turn activates the NAD(+) hydrolase activity of ThsA. The signal is similar to cyclic ADP-D-ribose, but how it differs is unknown. In vitro purified (but unactivated) ThsB has no NAD(+) hydrolyzing activity, no activity on AMP, CMP, GMP or UMP, does not alter the activity of ThsA, does not bind DNA. Hydrolyzes NAD(+) to make a cyclic ADP-D-ribose (cADPR) signaling molecule; might make 3'cADPR. This chain is Putative cyclic ADP-D-ribose synthase ThsB1, found in Bacillus cereus (strain MSX-D12).